The chain runs to 232 residues: Ion-translocating oxidoreductase complex subunit E (232 aa).

The next 5 helical transmembrane spans lie at 39–59 (LGLGIATMLVLIGSNVLISLV), 69–89 (IPVFVMIIAALVTAVQLLVNA), 93–113 (GLYMSLGIFLPLIVTNCIIIG), 128–148 (AFDGLMMGLGFTLVLVLLGAT), and 182–202 (SFLLAMLPPGAFIVMGLLIAL).

It belongs to the NqrDE/RnfAE family. In terms of assembly, the complex is composed of six subunits: RnfA, RnfB, RnfC, RnfD, RnfE and RnfG.

Its subcellular location is the cell inner membrane. In terms of biological role, part of a membrane-bound complex that couples electron transfer with translocation of ions across the membrane. This is Ion-translocating oxidoreductase complex subunit E from Shewanella oneidensis (strain ATCC 700550 / JCM 31522 / CIP 106686 / LMG 19005 / NCIMB 14063 / MR-1).